The chain runs to 602 residues: Wings apart-like protein homolog 1 (602 aa).

The tract at residues 34 to 66 (NKQKRSPGQTVSKRLHKKQRVVSNPDLSLPSSP) is disordered. Positions 54–66 (VVSNPDLSLPSSP) are enriched in polar residues. Residues 160 to 492 (IQMKSIHELR…LGLVEESHEF (333 aa)) form the WAPL domain.

The protein belongs to the WAPL family.

The protein localises to the nucleus. The protein resides in the chromosome. In terms of biological role, regulator of sister chromatid cohesion in mitosis which negatively regulates cohesin association with chromatin. The sequence is that of Wings apart-like protein homolog 1 (wpl1) from Schizosaccharomyces pombe (strain 972 / ATCC 24843) (Fission yeast).